Consider the following 165-residue polypeptide: NAD(P)H-quinone oxidoreductase subunit I, chloroplastic (165 aa).

2 4Fe-4S ferredoxin-type domains span residues 55 to 84 and 95 to 124; these read GRIHFEFDKCIACEVCVRVCPINLPVVDWE and KSYSIDFGVCIFCGNCVEYCPTNCLSMTEE. [4Fe-4S] cluster is bound by residues C64, C67, C70, C74, C104, C107, C110, and C114.

The protein belongs to the complex I 23 kDa subunit family. NDH is composed of at least 16 different subunits, 5 of which are encoded in the nucleus. It depends on [4Fe-4S] cluster as a cofactor.

The protein localises to the plastid. It is found in the chloroplast thylakoid membrane. It carries out the reaction a plastoquinone + NADH + (n+1) H(+)(in) = a plastoquinol + NAD(+) + n H(+)(out). The catalysed reaction is a plastoquinone + NADPH + (n+1) H(+)(in) = a plastoquinol + NADP(+) + n H(+)(out). Its function is as follows. NDH shuttles electrons from NAD(P)H:plastoquinone, via FMN and iron-sulfur (Fe-S) centers, to quinones in the photosynthetic chain and possibly in a chloroplast respiratory chain. The immediate electron acceptor for the enzyme in this species is believed to be plastoquinone. Couples the redox reaction to proton translocation, and thus conserves the redox energy in a proton gradient. In Psilotum nudum (Whisk fern), this protein is NAD(P)H-quinone oxidoreductase subunit I, chloroplastic.